A 150-amino-acid chain; its full sequence is Thyroid hormone-inducible hepatic protein (150 aa).

Residues 83-105 are disordered; that stretch reads KVAGNEGSEAENEAAETEEAEED. Ser90 is subject to Phosphoserine. The segment covering 90–105 has biased composition (acidic residues); sequence SEAENEAAETEEAEED.

Belongs to the SPOT14 family. As to quaternary structure, homodimer. Heterodimer with MID1IP1. Interacts with THRB and PLAGL1. In terms of tissue distribution, highly expressed in liver, lactating mammary gland, epididymal, retroperitoneal and brown fat. Mainly expressed in tissues that synthesize triglycerides.

The protein localises to the nucleus. The protein resides in the cytoplasm. Plays a role in the regulation of lipogenesis, especially in lactating mammary gland. Important for the biosynthesis of triglycerides with medium-length fatty acid chains. May modulate lipogenesis by interacting with MID1IP1 and preventing its interaction with ACACA. May function as transcriptional coactivator. May modulate the transcription factor activity of THRB. This chain is Thyroid hormone-inducible hepatic protein (Thrsp), found in Rattus norvegicus (Rat).